Here is a 268-residue protein sequence, read N- to C-terminus: UPF0739 protein C1orf74 homolog (268 aa).

Belongs to the UPF0739 family.

The chain is UPF0739 protein C1orf74 homolog from Salmo salar (Atlantic salmon).